We begin with the raw amino-acid sequence, 96 residues long: Protein Vpr (96 aa).

The tract at residues 1–42 is homooligomerization; sequence MEQAPEDQGPQREPYNEWTLELLEELKSEAVRHFPRIWLHNL. 3 positions are modified to phosphoserine; by host: S79, S94, and S96.

Belongs to the HIV-1 VPR protein family. Homooligomer, may form homodimer. Interacts with p6-gag region of the Pr55 Gag precursor protein through a (Leu-X-X)4 motif near the C-terminus of the P6gag protein. Interacts with host UNG. May interact with host RAD23A/HHR23A. Interacts with host VPRBP/DCAF1, leading to hijack the CUL4A-RBX1-DDB1-DCAF1/VPRBP complex, mediating ubiquitination of host proteins such as TERT and ZGPAT and arrest of the cell cycle in G2 phase. In terms of processing, phosphorylated on several residues by host. These phosphorylations regulate VPR activity for the nuclear import of the HIV-1 pre-integration complex.

It localises to the virion. The protein localises to the host nucleus. It is found in the host extracellular space. In terms of biological role, during virus replication, may deplete host UNG protein, and incude G2-M cell cycle arrest. Acts by targeting specific host proteins for degradation by the 26S proteasome, through association with the cellular CUL4A-DDB1 E3 ligase complex by direct interaction with host VPRPB/DCAF-1. Cell cycle arrest reportedly occurs within hours of infection and is not blocked by antiviral agents, suggesting that it is initiated by the VPR carried into the virion. Additionally, VPR induces apoptosis in a cell cycle dependent manner suggesting that these two effects are mechanistically linked. Detected in the serum and cerebrospinal fluid of AIDS patient, VPR may also induce cell death to bystander cells. Its function is as follows. During virus entry, plays a role in the transport of the viral pre-integration (PIC) complex to the host nucleus. This function is crucial for viral infection of non-dividing macrophages. May act directly at the nuclear pore complex, by binding nucleoporins phenylalanine-glycine (FG)-repeat regions. The sequence is that of Protein Vpr from Homo sapiens (Human).